Here is a 90-residue protein sequence, read N- to C-terminus: MSKGTASFGKKNKRNTEMCRRCGRQSYHKQKNSCSSCGYPNPKMRNPGSIKARRRRTIGTGRMRYMKRELRAAKNGHKGDPILRTLWAKN.

Zn(2+)-binding residues include Cys-19, Cys-22, Cys-34, and Cys-37. The segment at 19–37 (CRRCGRQSYHKQKNSCSSC) adopts a C4-type zinc-finger fold. Basic residues predominate over residues 21 to 31 (RCGRQSYHKQK). The interval 21–59 (RCGRQSYHKQKNSCSSCGYPNPKMRNPGSIKARRRRTIG) is disordered.

This sequence belongs to the eukaryotic ribosomal protein eL37 family. It depends on Zn(2+) as a cofactor.

Binds to the 23S rRNA. This Encephalitozoon cuniculi (strain GB-M1) (Microsporidian parasite) protein is Large ribosomal subunit protein eL37 (RPL37).